The primary structure comprises 446 residues: MERLASFGNDPFDKPPCRGCSSYLTEPYVKCAECGPPPFLLCLQCFTRGFEYKKHQSDHTYEIMTSDFPVLDPNWTAQEEMALLEAVMDCGFGNWQDVANQMCTKSKEECEKHYMKHFINNPLFASTLLNLKQAEEAQHNETAIPFHPADDPPRPTFDSLLSRDMAGYMPARARLSSRSFDNYAEWDLRDIDFVEDDSDILHALKIAVVDIYHSRFKREKTAGRKKIIRDHGLINLRKFQILERRYPKEVQDLYETMRRFARILGPVEHDKFIESHALEFELRREIKRLQEYRAAGITNFCSARTYDHLKKTRDEERLKRTMLSEVLQYIQDSSACQQWLSRQADIDSGPTPAAPIPSNSGRRSAPPLNLTGLPGTEKLNEKEKELCQMVRLVPGAYLEYKAALVNECNKQGGLRLAQARALIKIDVNKTRKIYDFLIREGYITKA.

The ZZ-type zinc-finger motif lies at 12–69; it reads FDKPPCRGCSSYLTEPYVKCAECGPPPFLLCLQCFTRGFEYKKHQSDHTYEIMTSDFP. Zn(2+)-binding residues include cysteine 17, cysteine 20, cysteine 31, cysteine 34, cysteine 42, cysteine 45, histidine 55, and histidine 59. The 53-residue stretch at 70-122 folds into the SANT domain; it reads VLDPNWTAQEEMALLEAVMDCGFGNWQDVANQMCTKSKEECEKHYMKHFINNP. Residues 345 to 375 form a disordered region; that stretch reads DIDSGPTPAAPIPSNSGRRSAPPLNLTGLPG. In terms of domain architecture, SWIRM spans 359–446; it reads NSGRRSAPPL…LIREGYITKA (88 aa). A DNA-binding region spans residues 429-438; sequence KTRKIYDFLI.

It localises to the nucleus. Its subcellular location is the chromosome. Its function is as follows. Component of some complex with histone acetyltransferase activity. Required for the function of some acidic activation domains, which activate transcription from a distant site. Binds double-stranded DNA. Binds dinucleosomes, probably at the linker region between neighboring nucleosomes. Plays a role in chromatin remodeling. The protein is Transcriptional adapter 2-alpha (TADA2A) of Gallus gallus (Chicken).